Reading from the N-terminus, the 33-residue chain is Mu-theraphotoxin-Ssp1a (33 aa).

3 disulfide bridges follow: cysteine 2/cysteine 17, cysteine 9/cysteine 22, and cysteine 16/cysteine 29. At leucine 33 the chain carries Leucine amide.

This sequence belongs to the neurotoxin 10 (Hwtx-1) family. 22 (Htx-4) subfamily. As to expression, expressed by the venom gland.

The protein resides in the secreted. Gating modifier toxin that traps voltage-sensing domain II of voltage-gated sodium channels in the resting state without significantly altering the voltage-dependence of activation and inactivation, or delay in recovery from inactivation. Inhibits hNav1.7/SCN9A (IC(50)=134 nM), followed in rank order of potency by Nav1.6/SCN8A (IC(50)=191 nM), Nav1.2/SCN2A (IC(50)=239 nM), Nav1.3/SCN3A (IC(50)=547 nM) and Nav1.1/SCN1A (IC(50)=674 nM). Its binding to Nav1.2, Nav1.3 and Nav1.7 is slowly reversible and incomplete, with ~25% of Nav1.2, ~50% of Nav1.3 and ~40% of Nav1.7 channels recovering from block after a 30 minutes washout, respectively. Binds in the aqueous cleft formed between the S1-S2 and S3-S4 loops of each channel subtype, primarily targeting the S3-S4 loop. The protein is Mu-theraphotoxin-Ssp1a of Selenotypus sp. (Feather-legged tarantula).